Consider the following 724-residue polypeptide: Long-chain-fatty-acid--CoA ligase ACSBG1 (724 aa).

Positions 1–51 (MPRNSGAGYGCPHGDPSMLDSRETPQESRQDMTVGTTQEKLKTSSLTDRQP) are disordered. Residues 20–30 (DSRETPQESRQ) are compositionally biased toward basic and acidic residues. The segment covering 31-51 (DMTVGTTQEKLKTSSLTDRQP) has biased composition (polar residues). Phosphoserine is present on residues Ser-53 and Ser-56. ATP-binding positions include 282–290 (TSGTTGNPK), 472–477 (AGYGLS), Asp-550, and Arg-565. Tyr-658 bears the Phosphotyrosine mark. Lys-701 provides a ligand contact to ATP.

This sequence belongs to the ATP-dependent AMP-binding enzyme family. Bubblegum subfamily.

The protein localises to the cytoplasm. It is found in the cytoplasmic vesicle. It localises to the microsome. Its subcellular location is the endoplasmic reticulum. The protein resides in the cell membrane. The enzyme catalyses a long-chain fatty acid + ATP + CoA = a long-chain fatty acyl-CoA + AMP + diphosphate. It carries out the reaction (E)-hexadec-2-enoate + ATP + CoA = (2E)-hexadecenoyl-CoA + AMP + diphosphate. The catalysed reaction is hexadecanoate + ATP + CoA = hexadecanoyl-CoA + AMP + diphosphate. Functionally, catalyzes the conversion of fatty acids such as long-chain and very long-chain fatty acids to their active form acyl-CoAs for both synthesis of cellular lipids, and degradation via beta-oxidation. Can activate diverse saturated, monosaturated and polyunsaturated fatty acids. This Macaca fascicularis (Crab-eating macaque) protein is Long-chain-fatty-acid--CoA ligase ACSBG1.